The chain runs to 124 residues: Small ribosomal subunit protein eS6 (124 aa).

This sequence belongs to the eukaryotic ribosomal protein eS6 family.

This chain is Small ribosomal subunit protein eS6, found in Methanococcus maripaludis (strain C6 / ATCC BAA-1332).